A 461-amino-acid polypeptide reads, in one-letter code: uncharacterized protein (461 aa).

Disordered regions lie at residues 254–273 (NNNN…NNNN) and 368–414 (QPSQ…NNNS). Residues 381-413 (NNNNNNNNNNNNNNNNNNNNNNNNNNNNNNNNN) are compositionally biased toward low complexity.

This is an uncharacterized protein from Dictyostelium discoideum (Social amoeba).